Here is a 106-residue protein sequence, read N- to C-terminus: Large ribosomal subunit protein uL24 (106 aa).

The tract at residues 69–106 (SNLNPVDPKTGKATRVGRKVSSEGTLVRYSKKSGEEIK) is disordered.

This sequence belongs to the universal ribosomal protein uL24 family. As to quaternary structure, part of the 50S ribosomal subunit.

In terms of biological role, one of two assembly initiator proteins, it binds directly to the 5'-end of the 23S rRNA, where it nucleates assembly of the 50S subunit. Functionally, one of the proteins that surrounds the polypeptide exit tunnel on the outside of the subunit. This is Large ribosomal subunit protein uL24 from Bacteroides fragilis (strain ATCC 25285 / DSM 2151 / CCUG 4856 / JCM 11019 / LMG 10263 / NCTC 9343 / Onslow / VPI 2553 / EN-2).